Reading from the N-terminus, the 309-residue chain is Aspartate carbamoyltransferase catalytic subunit (309 aa).

Residues R58 and T59 each contribute to the carbamoyl phosphate site. L-aspartate is bound at residue K86. Carbamoyl phosphate is bound by residues R108, H136, and Q139. The L-aspartate site is built by R170 and R224. Carbamoyl phosphate contacts are provided by G266 and P267.

Belongs to the aspartate/ornithine carbamoyltransferase superfamily. ATCase family. In terms of assembly, heterododecamer (2C3:3R2) of six catalytic PyrB chains organized as two trimers (C3), and six regulatory PyrI chains organized as three dimers (R2).

The enzyme catalyses carbamoyl phosphate + L-aspartate = N-carbamoyl-L-aspartate + phosphate + H(+). Its pathway is pyrimidine metabolism; UMP biosynthesis via de novo pathway; (S)-dihydroorotate from bicarbonate: step 2/3. Catalyzes the condensation of carbamoyl phosphate and aspartate to form carbamoyl aspartate and inorganic phosphate, the committed step in the de novo pyrimidine nucleotide biosynthesis pathway. This is Aspartate carbamoyltransferase catalytic subunit from Campylobacter concisus (strain 13826).